We begin with the raw amino-acid sequence, 103 residues long: Large ribosomal subunit protein bL21 (103 aa).

The protein belongs to the bacterial ribosomal protein bL21 family. In terms of assembly, part of the 50S ribosomal subunit. Contacts protein L20.

In terms of biological role, this protein binds to 23S rRNA in the presence of protein L20. The sequence is that of Large ribosomal subunit protein bL21 from Variovorax paradoxus (strain S110).